We begin with the raw amino-acid sequence, 364 residues long: Probable tartrate dehydrogenase/decarboxylase TtuC (364 aa).

Mn(2+)-binding residues include Asp222, Asp246, and Asp250.

It belongs to the isocitrate and isopropylmalate dehydrogenases family. Mg(2+) serves as cofactor. It depends on Mn(2+) as a cofactor. K(+) is required as a cofactor.

The protein resides in the cytoplasm. It catalyses the reaction tartrate + NAD(+) = 2-hydroxy-3-oxosuccinate + NADH + H(+). The enzyme catalyses (2R,3S)-tartrate + NAD(+) = 2-hydroxy-3-oxosuccinate + NADH + H(+). It carries out the reaction (2R,3R)-tartrate + NAD(+) = 2-hydroxy-3-oxosuccinate + NADH + H(+). The catalysed reaction is (2R,3R)-tartrate + H(+) = (R)-glycerate + CO2. It catalyses the reaction (R)-malate + NAD(+) = pyruvate + CO2 + NADH. Its pathway is carbohydrate acid metabolism; tartrate degradation; 2-hydroxy-3-oxosuccinate from L-tartrate: step 1/1. It functions in the pathway carbohydrate acid metabolism; tartrate degradation; 2-hydroxy-3-oxosuccinate from meso-tartrate: step 1/1. The protein operates within carbohydrate acid metabolism; tartrate degradation; D-glycerate from L-tartrate: step 1/1. In terms of biological role, has multiple catalytic activities. Apart from catalyzing the oxidation of (+)-tartrate to oxaloglycolate, also converts meso-tartrate to D-glycerate and catalyzes the oxidative decarboxylation of D-malate to pyruvate. The polypeptide is Probable tartrate dehydrogenase/decarboxylase TtuC (ttuC) (Agrobacterium vitis (Rhizobium vitis)).